We begin with the raw amino-acid sequence, 505 residues long: Glutamate--tRNA ligase (505 aa).

The 'HIGH' region signature appears at 12-22 (PSPTGDPHVGT). The 'KMSKS' region signature appears at 253-257 (KLSKR). An ATP-binding site is contributed by K256.

Belongs to the class-I aminoacyl-tRNA synthetase family. Glutamate--tRNA ligase type 1 subfamily. As to quaternary structure, monomer.

It localises to the cytoplasm. It carries out the reaction tRNA(Glu) + L-glutamate + ATP = L-glutamyl-tRNA(Glu) + AMP + diphosphate. Catalyzes the attachment of glutamate to tRNA(Glu) in a two-step reaction: glutamate is first activated by ATP to form Glu-AMP and then transferred to the acceptor end of tRNA(Glu). This chain is Glutamate--tRNA ligase, found in Chlamydia pneumoniae (Chlamydophila pneumoniae).